We begin with the raw amino-acid sequence, 155 residues long: MARMHTRRRGSSGSDRPTADEPPEWSDVDEDAIEERVVELAEQGHDPSQIGLKLRDEGVQGTPVPDVKLATGKKVTEILEAHDAEPELPEDFRNLLEKAVRLHEHVEANGQDHQNKRALQNTQSKIRRLADYYRGDKLDEEFAYSYETAREIIEE.

Residues 1–10 (MARMHTRRRG) show a composition bias toward basic residues. Residues 1 to 66 (MARMHTRRRG…EGVQGTPVPD (66 aa)) are disordered. Positions 21–33 (EPPEWSDVDEDAI) are enriched in acidic residues. Residues 34–45 (EERVVELAEQGH) are compositionally biased toward basic and acidic residues.

Belongs to the universal ribosomal protein uS15 family. Part of the 30S ribosomal subunit.

This chain is Small ribosomal subunit protein uS15, found in Halobacterium salinarum (strain ATCC 700922 / JCM 11081 / NRC-1) (Halobacterium halobium).